A 592-amino-acid chain; its full sequence is 2-succinyl-5-enolpyruvyl-6-hydroxy-3-cyclohexene-1-carboxylate synthase (592 aa).

It belongs to the TPP enzyme family. MenD subfamily. As to quaternary structure, homodimer. The cofactor is Mg(2+). Mn(2+) is required as a cofactor. Thiamine diphosphate serves as cofactor.

The enzyme catalyses isochorismate + 2-oxoglutarate + H(+) = 5-enolpyruvoyl-6-hydroxy-2-succinyl-cyclohex-3-ene-1-carboxylate + CO2. It functions in the pathway quinol/quinone metabolism; 1,4-dihydroxy-2-naphthoate biosynthesis; 1,4-dihydroxy-2-naphthoate from chorismate: step 2/7. The protein operates within quinol/quinone metabolism; menaquinone biosynthesis. Its function is as follows. Catalyzes the thiamine diphosphate-dependent decarboxylation of 2-oxoglutarate and the subsequent addition of the resulting succinic semialdehyde-thiamine pyrophosphate anion to isochorismate to yield 2-succinyl-5-enolpyruvyl-6-hydroxy-3-cyclohexene-1-carboxylate (SEPHCHC). The protein is 2-succinyl-5-enolpyruvyl-6-hydroxy-3-cyclohexene-1-carboxylate synthase of Leifsonia xyli subsp. xyli (strain CTCB07).